The chain runs to 357 residues: Phospho-N-acetylmuramoyl-pentapeptide-transferase (357 aa).

A run of 10 helical transmembrane segments spans residues 23 to 43 (AIFS…YFIY), 70 to 90 (TMGG…YCNL), 91 to 111 (SNIY…IGFI), 127 to 147 (LKWK…MIKI), 171 to 191 (YLYI…VNLT), 196 to 216 (GLAI…SLFS), 236 to 256 (LAIL…FNSY), 260 to 280 (VFMG…IAIL), 286 to 306 (LLII…LQII), and 334 to 354 (LIIV…LISL).

The protein belongs to the glycosyltransferase 4 family. MraY subfamily. Mg(2+) serves as cofactor.

It is found in the cell inner membrane. It carries out the reaction UDP-N-acetyl-alpha-D-muramoyl-L-alanyl-gamma-D-glutamyl-meso-2,6-diaminopimeloyl-D-alanyl-D-alanine + di-trans,octa-cis-undecaprenyl phosphate = di-trans,octa-cis-undecaprenyl diphospho-N-acetyl-alpha-D-muramoyl-L-alanyl-D-glutamyl-meso-2,6-diaminopimeloyl-D-alanyl-D-alanine + UMP. It functions in the pathway cell wall biogenesis; peptidoglycan biosynthesis. Its function is as follows. Catalyzes the initial step of the lipid cycle reactions in the biosynthesis of the cell wall peptidoglycan: transfers peptidoglycan precursor phospho-MurNAc-pentapeptide from UDP-MurNAc-pentapeptide onto the lipid carrier undecaprenyl phosphate, yielding undecaprenyl-pyrophosphoryl-MurNAc-pentapeptide, known as lipid I. This is Phospho-N-acetylmuramoyl-pentapeptide-transferase from Buchnera aphidicola subsp. Acyrthosiphon pisum (strain 5A).